The chain runs to 271 residues: Orotidine 5'-phosphate decarboxylase (271 aa).

Lys95 functions as the Proton donor in the catalytic mechanism.

This sequence belongs to the OMP decarboxylase family. Type 2 subfamily.

The catalysed reaction is orotidine 5'-phosphate + H(+) = UMP + CO2. It functions in the pathway pyrimidine metabolism; UMP biosynthesis via de novo pathway; UMP from orotate: step 2/2. The chain is Orotidine 5'-phosphate decarboxylase from Janthinobacterium sp. (strain Marseille) (Minibacterium massiliensis).